A 598-amino-acid polypeptide reads, in one-letter code: Glutamine--fructose-6-phosphate aminotransferase [isomerizing] (598 aa).

Residue Cys-2 is the Nucleophile; for GATase activity of the active site. In terms of domain architecture, Glutamine amidotransferase type-2 spans 2–219; sequence CGIIGYIGPR…DGEYGIVSKD (218 aa). SIS domains are found at residues 280-420 and 449-588; these read VAEL…LVGI and IAVK…PDRP. Catalysis depends on Lys-593, which acts as the For Fru-6P isomerization activity.

Homodimer.

The protein localises to the cytoplasm. The enzyme catalyses D-fructose 6-phosphate + L-glutamine = D-glucosamine 6-phosphate + L-glutamate. Its function is as follows. Catalyzes the first step in hexosamine metabolism, converting fructose-6P into glucosamine-6P using glutamine as a nitrogen source. This is Glutamine--fructose-6-phosphate aminotransferase [isomerizing] from Pyrococcus horikoshii (strain ATCC 700860 / DSM 12428 / JCM 9974 / NBRC 100139 / OT-3).